Reading from the N-terminus, the 34-residue chain is Toxin Ptu1 (34 aa).

3 disulfide bridges follow: Cys5–Cys20, Cys12–Cys26, and Cys19–Cys33.

It is found in the secreted. Binds reversibly and blocks N-type voltage-gated calcium channels (Cav). This chain is Toxin Ptu1, found in Peirates turpis (Assassin bug).